Consider the following 500-residue polypeptide: Cysteine-rich secretory protein LCCL domain-containing 1 (500 aa).

A signal peptide spans Met-1–Ala-23. Residues Leu-66 to Tyr-206 form the SCP domain. The tract at residues Glu-258–Asn-281 is disordered. LCCL domains follow at residues Met-289 to Phe-384 and Thr-390 to Lys-492. Intrachain disulfides connect Cys-295/Cys-313, Cys-317/Cys-337, Cys-396/Cys-418, and Cys-422/Cys-445.

Belongs to the CRISP family.

Its subcellular location is the secreted. In Mus musculus (Mouse), this protein is Cysteine-rich secretory protein LCCL domain-containing 1 (Crispld1).